The following is an 880-amino-acid chain: Calcium-transporting ATPase lmo0841 (880 aa).

The next 4 helical transmembrane spans lie at 47-67 (LWKL…VIAA), 68-88 (LVQL…VLIV), 243-263 (LGLG…GRVL), and 271-291 (MATA…AAIP). 4 residues coordinate Ca(2+): valine 287, alanine 288, isoleucine 290, and glutamate 292. The active-site 4-aspartylphosphate intermediate is aspartate 334. The next 5 membrane-spanning stretches (helical) occupy residues 681-701 (IAYL…ALVL), 707-727 (FTAL…AIAL), 756-776 (AVIS…YIGM), 819-839 (YVIG…LPGA), and 854-874 (WSIA…IKVV). The Ca(2+) site is built by asparagine 716 and aspartate 720.

Belongs to the cation transport ATPase (P-type) (TC 3.A.3) family. Type IIA subfamily.

It localises to the cell membrane. The catalysed reaction is Ca(2+)(in) + ATP + H2O = Ca(2+)(out) + ADP + phosphate + H(+). Phosphorylation is inhibited by EGTA and vanadate. ATPase activity is stimulated by Sr(2+). Inhibited by very high concentrations of cyclopiazonic acid (CPA). Its function is as follows. Catalyzes the hydrolysis of ATP coupled with the transport of calcium. The transport is electrogenic with a probable ATP:Ca(2+):H(+) stoichiometry of 1:1:1. May have an important role in survival of the bacterium when stressed by a combination of a high calcium concentration and alkaline pH. This chain is Calcium-transporting ATPase lmo0841, found in Listeria monocytogenes serovar 1/2a (strain ATCC BAA-679 / EGD-e).